A 156-amino-acid chain; its full sequence is Dynein 16 kDa light chain, flagellar outer arm (156 aa).

Residues 2-116 (AAGLPPVQYS…LNQQVLSLTP (115 aa)) form the Thioredoxin domain. Residues C37 and C40 are joined by a disulfide bond.

As to quaternary structure, consists of at least 3 heavy chains (alpha, beta and gamma), 2 intermediate chains and 8 light chains.

The protein localises to the cell projection. The protein resides in the cilium. It is found in the flagellum. Its subcellular location is the cytoplasm. It localises to the cytoskeleton. The protein localises to the flagellum axoneme. Its function is as follows. May be involved in regulating the redox state of functionally important thiol groups within dynein. The polypeptide is Dynein 16 kDa light chain, flagellar outer arm (Chlamydomonas reinhardtii (Chlamydomonas smithii)).